The sequence spans 145 residues: 3-dehydroquinate dehydratase 1 (145 aa).

Tyr-24 functions as the Proton acceptor in the catalytic mechanism. Substrate contacts are provided by Asn-75, His-81, and Asp-88. His-101 acts as the Proton donor in catalysis. Residues Ile-102–Ser-103 and Arg-112 each bind substrate.

Belongs to the type-II 3-dehydroquinase family. Homododecamer.

The enzyme catalyses 3-dehydroquinate = 3-dehydroshikimate + H2O. It participates in metabolic intermediate biosynthesis; chorismate biosynthesis; chorismate from D-erythrose 4-phosphate and phosphoenolpyruvate: step 3/7. Functionally, catalyzes a trans-dehydration via an enolate intermediate. The chain is 3-dehydroquinate dehydratase 1 (aroQ1) from Agrobacterium fabrum (strain C58 / ATCC 33970) (Agrobacterium tumefaciens (strain C58)).